The following is a 156-amino-acid chain: Small ribosomal subunit protein uS7 (156 aa).

Belongs to the universal ribosomal protein uS7 family. In terms of assembly, part of the 30S ribosomal subunit. Contacts proteins S9 and S11.

Its function is as follows. One of the primary rRNA binding proteins, it binds directly to 16S rRNA where it nucleates assembly of the head domain of the 30S subunit. Is located at the subunit interface close to the decoding center, probably blocks exit of the E-site tRNA. The polypeptide is Small ribosomal subunit protein uS7 (Acholeplasma laidlawii (strain PG-8A)).